The following is a 355-amino-acid chain: 3'-5' exonuclease (355 aa).

The disordered stretch occupies residues 1 to 121; the sequence is MDKYLIKLPN…PSPEKEKPEK (121 aa). Basic and acidic residues-rich tracts occupy residues 17–29, 36–50, and 72–92; these read VSDK…KETP, AKKD…KENT, and KNLD…ENPP. 2 positions are modified to phosphoserine: Ser-105 and Ser-113. A 3'-5' exonuclease domain is found at 147–315; it reads VMQWVEKQKE…GQVIYRDLEQ (169 aa). Mg(2+) is bound by residues Asp-164, Glu-166, and Asp-302.

The protein belongs to the WRNexo family.

The protein resides in the nucleus. Has exonuclease activity on both single-stranded and duplex templates bearing overhangs, but not blunt ended duplex DNA, and cleaves in a 3'-5' direction. Essential for the formation of DNA replication focal centers. Has an important role in maintaining genome stability. The protein is 3'-5' exonuclease of Drosophila ananassae (Fruit fly).